The primary structure comprises 182 residues: Succinate dehydrogenase cytochrome b560 subunit, mitochondrial (182 aa).

The helical transmembrane segment at 65–94 (LTWMLSGFHRISGCVMAGTLLVGGIGFAVL) threads the bilayer. Topologically, residues 95–114 (PFDFTAFVDFIRSWNLPCAV) are mitochondrial intermembrane. The helical transmembrane segment at 115-139 (TAVFKYIIAFPIIFHTLNGIRFLGF) threads the bilayer. His129 is a heme binding site. At 140-147 (DLAKGVNN) the chain is on the mitochondrial matrix side. The chain crosses the membrane as a helical span at residues 148 to 169 (VGQIYKSGYLVSGLSAILALAI). The Mitochondrial intermembrane portion of the chain corresponds to 170–172 (VFN).

It belongs to the cytochrome b560 family. Component of complex II composed of four subunits: a flavoprotein (FP), iron-sulfur protein (IP), and a cytochrome b560 composed of two integral membrane proteins. It depends on heme as a cofactor.

The protein resides in the mitochondrion inner membrane. It participates in carbohydrate metabolism; tricarboxylic acid cycle. In terms of biological role, membrane-anchoring subunit of succinate dehydrogenase (SDH) that is involved in complex II of the mitochondrial electron transport chain and is responsible for transferring electrons from succinate to ubiquinone (coenzyme Q). Mediates resistance to enteropathogenic E.coli infection. This Caenorhabditis elegans protein is Succinate dehydrogenase cytochrome b560 subunit, mitochondrial (mev-1).